Reading from the N-terminus, the 579-residue chain is ATP-dependent lipid A-core flippase (579 aa).

A run of 5 helical transmembrane segments spans residues 24–44 (FALSIVGLILTAATEPMLPAL), 63–83 (WVPLLLLGLFVLRGVASFIST), 150–170 (VLGLLGYLVWLNWRLTLIVFA), 251–271 (VIQFIAAIALAIIVFIAAGQA), and 275–295 (TTTVGGFVAFFMAMLLLFAPL). An ABC transmembrane type-1 domain is found at 25–307 (ALSIVGLILT…LTAVNDQLQR (283 aa)). An ABC transporter domain is found at 339-575 (LAFRDVGLTY…QGRYAQLHAL (237 aa)). Residue 373-380 (GASGSGKT) coordinates ATP.

This sequence belongs to the ABC transporter superfamily. Lipid exporter (TC 3.A.1.106) family. In terms of assembly, homodimer.

The protein localises to the cell inner membrane. It catalyses the reaction ATP + H2O + lipid A-core oligosaccharideSide 1 = ADP + phosphate + lipid A-core oligosaccharideSide 2.. Functionally, involved in lipopolysaccharide (LPS) biosynthesis. Translocates lipid A-core from the inner to the outer leaflet of the inner membrane. Transmembrane domains (TMD) form a pore in the inner membrane and the ATP-binding domain (NBD) is responsible for energy generation. This Thiobacillus denitrificans (strain ATCC 25259 / T1) protein is ATP-dependent lipid A-core flippase.